Consider the following 198-residue polypeptide: SCO2-like protein RF_0043 (198 aa).

It belongs to the SCO1/2 family.

In Rickettsia felis (strain ATCC VR-1525 / URRWXCal2) (Rickettsia azadi), this protein is SCO2-like protein RF_0043.